We begin with the raw amino-acid sequence, 1358 residues long: DNA-directed RNA polymerase subunit beta (1358 aa).

Belongs to the RNA polymerase beta chain family. The RNAP catalytic core consists of 2 alpha, 1 beta, 1 beta' and 1 omega subunit. When a sigma factor is associated with the core the holoenzyme is formed, which can initiate transcription.

It carries out the reaction RNA(n) + a ribonucleoside 5'-triphosphate = RNA(n+1) + diphosphate. In terms of biological role, DNA-dependent RNA polymerase catalyzes the transcription of DNA into RNA using the four ribonucleoside triphosphates as substrates. In Chromohalobacter salexigens (strain ATCC BAA-138 / DSM 3043 / CIP 106854 / NCIMB 13768 / 1H11), this protein is DNA-directed RNA polymerase subunit beta.